The primary structure comprises 152 residues: Deoxyuridine 5'-triphosphate nucleotidohydrolase (152 aa).

Residues 71–73 (RSG), asparagine 84, 88–90 (LID), and methionine 98 each bind substrate.

This sequence belongs to the dUTPase family. Mg(2+) serves as cofactor.

The enzyme catalyses dUTP + H2O = dUMP + diphosphate + H(+). It functions in the pathway pyrimidine metabolism; dUMP biosynthesis; dUMP from dCTP (dUTP route): step 2/2. Functionally, this enzyme is involved in nucleotide metabolism: it produces dUMP, the immediate precursor of thymidine nucleotides and it decreases the intracellular concentration of dUTP so that uracil cannot be incorporated into DNA. The polypeptide is Deoxyuridine 5'-triphosphate nucleotidohydrolase (Coxiella burnetii (strain Dugway 5J108-111)).